Here is a 320-residue protein sequence, read N- to C-terminus: Lipoyl synthase (320 aa).

A disordered region spans residues 1 to 28 (MVTVVDRVTDRRLRHPEKAHRPDTSVQK). Basic and acidic residues predominate over residues 19 to 28 (AHRPDTSVQK). Positions 59, 64, 70, 85, 89, 92, and 298 each coordinate [4Fe-4S] cluster. The region spanning 71-287 (WSQRHASFMI…AKIGKVKGFL (217 aa)) is the Radical SAM core domain.

Belongs to the radical SAM superfamily. Lipoyl synthase family. Requires [4Fe-4S] cluster as cofactor.

The protein resides in the cytoplasm. The enzyme catalyses [[Fe-S] cluster scaffold protein carrying a second [4Fe-4S](2+) cluster] + N(6)-octanoyl-L-lysyl-[protein] + 2 oxidized [2Fe-2S]-[ferredoxin] + 2 S-adenosyl-L-methionine + 4 H(+) = [[Fe-S] cluster scaffold protein] + N(6)-[(R)-dihydrolipoyl]-L-lysyl-[protein] + 4 Fe(3+) + 2 hydrogen sulfide + 2 5'-deoxyadenosine + 2 L-methionine + 2 reduced [2Fe-2S]-[ferredoxin]. It participates in protein modification; protein lipoylation via endogenous pathway; protein N(6)-(lipoyl)lysine from octanoyl-[acyl-carrier-protein]: step 2/2. Catalyzes the radical-mediated insertion of two sulfur atoms into the C-6 and C-8 positions of the octanoyl moiety bound to the lipoyl domains of lipoate-dependent enzymes, thereby converting the octanoylated domains into lipoylated derivatives. The sequence is that of Lipoyl synthase from Bartonella henselae (strain ATCC 49882 / DSM 28221 / CCUG 30454 / Houston 1) (Rochalimaea henselae).